The following is a 329-amino-acid chain: GTP 3',8-cyclase (329 aa).

A Radical SAM core domain is found at 8–234 (AFARKFYYLR…QLRQRSDGPA (227 aa)). Position 17 (arginine 17) interacts with GTP. Residues cysteine 24 and cysteine 28 each coordinate [4Fe-4S] cluster. Tyrosine 30 is an S-adenosyl-L-methionine binding site. Position 31 (cysteine 31) interacts with [4Fe-4S] cluster. Residue arginine 68 coordinates GTP. Residue glycine 72 coordinates S-adenosyl-L-methionine. Threonine 99 serves as a coordination point for GTP. Serine 123 is an S-adenosyl-L-methionine binding site. Lysine 160 is a GTP binding site. S-adenosyl-L-methionine is bound at residue methionine 194. [4Fe-4S] cluster contacts are provided by cysteine 257 and cysteine 260. 262–264 (RLR) serves as a coordination point for GTP. Cysteine 274 contributes to the [4Fe-4S] cluster binding site.

The protein belongs to the radical SAM superfamily. MoaA family. As to quaternary structure, monomer and homodimer. The cofactor is [4Fe-4S] cluster.

The catalysed reaction is GTP + AH2 + S-adenosyl-L-methionine = (8S)-3',8-cyclo-7,8-dihydroguanosine 5'-triphosphate + 5'-deoxyadenosine + L-methionine + A + H(+). The protein operates within cofactor biosynthesis; molybdopterin biosynthesis. In terms of biological role, catalyzes the cyclization of GTP to (8S)-3',8-cyclo-7,8-dihydroguanosine 5'-triphosphate. The chain is GTP 3',8-cyclase from Escherichia coli O127:H6 (strain E2348/69 / EPEC).